A 356-amino-acid polypeptide reads, in one-letter code: WAT1-related protein At1g68170 (356 aa).

Transmembrane regions (helical) follow at residues 4–24 (ITAMVVVQIATAGLNIFFKLA), 33–53 (VLVAYRLLFATLFMIPICFIF), 65–85 (LMLLALLSGLLGVVIPSILTI), 94–114 (TFTSAAGVLTPLVTFIFAALL), 125–145 (VGLAKVFGTLFGVGGALVFIF), 176–196 (ISILGALLVFGGNISISLWFL), 210–230 (WNATLMNMMGGVVAMLVALCW), 245–265 (LLTIAYAAILISGMVVAVNAW), 273–293 (LFVSVFSPVGLVIVALVGSFL), and 298–318 (LHLGSIIGTVIIVGALYIVLW). 2 EamA domains span residues 14-142 (TAGL…GALV) and 191-317 (ISLW…YIVL).

It belongs to the drug/metabolite transporter (DMT) superfamily. Plant drug/metabolite exporter (P-DME) (TC 2.A.7.4) family.

It is found in the membrane. The chain is WAT1-related protein At1g68170 from Arabidopsis thaliana (Mouse-ear cress).